A 640-amino-acid chain; its full sequence is Probable potassium transport system protein Kup 2 (640 aa).

The segment at 1–20 (MTADIAATPAETPATNGHGD) is disordered. 12 helical membrane passes run 30 to 50 (LTLGSIGVVYGDIGTSPLYAL), 71 to 91 (VVSLILWALIVVVTLKYVVIL), 117 to 137 (ASIIVLLGIISGALFYGDAVI), 155 to 175 (AAFDPYVVPLTIIILVMLFAV), 183 to 203 (VAAFFGPIMLIWFLVIGIAAF), 224 to 244 (FMLHHGIIGFITLGAVFLAVT), 265 to 285 (WLFVVLPSLALNYLGQGALVI), 294 to 314 (PFFLMFPDWALIPMVALATVA), 363 to 383 (LLLVSVVLLVLLFKSSSALAS), 385 to 405 (YGISVTGTMVVTAMMGFVVIW), 410 to 430 (WSPIAAGALIAPFLFLDLTFL), and 437 to 457 (VLEGGWVPLALGGFVMTLMYT).

This sequence belongs to the HAK/KUP transporter (TC 2.A.72) family.

Its subcellular location is the cell inner membrane. The catalysed reaction is K(+)(in) + H(+)(in) = K(+)(out) + H(+)(out). Transport of potassium into the cell. Likely operates as a K(+):H(+) symporter. The protein is Probable potassium transport system protein Kup 2 of Bradyrhizobium sp. (strain ORS 278).